The chain runs to 395 residues: Cuticlin-5 (395 aa).

A signal peptide spans 1-18; it reads MNFILAVFAIILLQAVRG. At 19 to 358 the chain is on the extracellular side; that stretch reads EIDNAIVGDP…ELCMTAIGTT (340 aa). The 246-residue stretch at 46–291 folds into the ZP domain; sequence SCVGNFIIKV…DYCDVPSCPD (246 aa). Residues Asn90 and Asn307 are each glycosylated (N-linked (GlcNAc...) asparagine). A helical transmembrane segment spans residues 359-379; that stretch reads LLVFLNAFLFIISLVSIVHVC. Over 380–395 the chain is Cytoplasmic; sequence CFRTSPKLEKTKSTML.

The protein localises to the cell membrane. In terms of biological role, plays a role in alae formation in L1 and dauer stage larvae. This chain is Cuticlin-5, found in Caenorhabditis elegans.